A 513-amino-acid chain; its full sequence is Light-independent protochlorophyllide reductase subunit B (513 aa).

Asp-36 is a [4Fe-4S] cluster binding site. Catalysis depends on Asp-299, which acts as the Proton donor. Position 434-435 (434-435 (GM)) interacts with substrate.

Belongs to the ChlB/BchB/BchZ family. In terms of assembly, protochlorophyllide reductase is composed of three subunits; ChlL, ChlN and ChlB. Forms a heterotetramer of two ChlB and two ChlN subunits. [4Fe-4S] cluster serves as cofactor.

It is found in the plastid. Its subcellular location is the chloroplast. The catalysed reaction is chlorophyllide a + oxidized 2[4Fe-4S]-[ferredoxin] + 2 ADP + 2 phosphate = protochlorophyllide a + reduced 2[4Fe-4S]-[ferredoxin] + 2 ATP + 2 H2O. Its pathway is porphyrin-containing compound metabolism; chlorophyll biosynthesis (light-independent). Component of the dark-operative protochlorophyllide reductase (DPOR) that uses Mg-ATP and reduced ferredoxin to reduce ring D of protochlorophyllide (Pchlide) to form chlorophyllide a (Chlide). This reaction is light-independent. The NB-protein (ChlN-ChlB) is the catalytic component of the complex. This Staurastrum punctulatum (Green alga) protein is Light-independent protochlorophyllide reductase subunit B.